We begin with the raw amino-acid sequence, 729 residues long: Fatty acid oxidation complex subunit alpha (729 aa).

Residues M1–K189 are enoyl-CoA hydratase/isomerase. D296 lines the substrate pocket. Residues E311 to A729 form a 3-hydroxyacyl-CoA dehydrogenase region. NAD(+) contacts are provided by residues M324, D343, V400–E402, K407, and S429. H450 (for 3-hydroxyacyl-CoA dehydrogenase activity) is an active-site residue. Residue N453 participates in NAD(+) binding. Substrate contacts are provided by N500 and Y660. The disordered stretch occupies residues R708–A729.

In the N-terminal section; belongs to the enoyl-CoA hydratase/isomerase family. It in the C-terminal section; belongs to the 3-hydroxyacyl-CoA dehydrogenase family. In terms of assembly, heterotetramer of two alpha chains (FadB) and two beta chains (FadA).

The catalysed reaction is a (3S)-3-hydroxyacyl-CoA + NAD(+) = a 3-oxoacyl-CoA + NADH + H(+). The enzyme catalyses a (3S)-3-hydroxyacyl-CoA = a (2E)-enoyl-CoA + H2O. It carries out the reaction a 4-saturated-(3S)-3-hydroxyacyl-CoA = a (3E)-enoyl-CoA + H2O. It catalyses the reaction (3S)-3-hydroxybutanoyl-CoA = (3R)-3-hydroxybutanoyl-CoA. The catalysed reaction is a (3Z)-enoyl-CoA = a 4-saturated (2E)-enoyl-CoA. The enzyme catalyses a (3E)-enoyl-CoA = a 4-saturated (2E)-enoyl-CoA. It participates in lipid metabolism; fatty acid beta-oxidation. In terms of biological role, involved in the aerobic and anaerobic degradation of long-chain fatty acids via beta-oxidation cycle. Catalyzes the formation of 3-oxoacyl-CoA from enoyl-CoA via L-3-hydroxyacyl-CoA. It can also use D-3-hydroxyacyl-CoA and cis-3-enoyl-CoA as substrate. In Salmonella schwarzengrund (strain CVM19633), this protein is Fatty acid oxidation complex subunit alpha.